Here is a 46-residue protein sequence, read N- to C-terminus: Diuretic hormone class 1 (46 aa).

Isoleucine 46 is modified (isoleucine amide).

Its subcellular location is the secreted. Regulation of fluid secretion. Stimulates primary urine secretion by Malpighian tubules and causes a dose-dependent stimulation of cAMP levels in the tubules. Has a greater effect on the transport of Na(+) then K(+) ions. In vitro, has synergistic effects with the smaller diuretic hormone DH(31) which co-occurs with it. The polypeptide is Diuretic hormone class 1 (Diploptera punctata (Pacific beetle cockroach)).